Consider the following 583-residue polypeptide: Proline--tRNA ligase (583 aa).

This sequence belongs to the class-II aminoacyl-tRNA synthetase family. ProS type 1 subfamily. In terms of assembly, homodimer.

It localises to the cytoplasm. It catalyses the reaction tRNA(Pro) + L-proline + ATP = L-prolyl-tRNA(Pro) + AMP + diphosphate. Functionally, catalyzes the attachment of proline to tRNA(Pro) in a two-step reaction: proline is first activated by ATP to form Pro-AMP and then transferred to the acceptor end of tRNA(Pro). As ProRS can inadvertently accommodate and process non-cognate amino acids such as alanine and cysteine, to avoid such errors it has two additional distinct editing activities against alanine. One activity is designated as 'pretransfer' editing and involves the tRNA(Pro)-independent hydrolysis of activated Ala-AMP. The other activity is designated 'posttransfer' editing and involves deacylation of mischarged Ala-tRNA(Pro). The misacylated Cys-tRNA(Pro) is not edited by ProRS. This chain is Proline--tRNA ligase, found in Acidothermus cellulolyticus (strain ATCC 43068 / DSM 8971 / 11B).